We begin with the raw amino-acid sequence, 139 residues long: Nucleoside diphosphate kinase (139 aa).

Residues Lys-10, Phe-58, Arg-86, Thr-92, Arg-103, and Asn-113 each coordinate ATP. Residue His-116 is the Pros-phosphohistidine intermediate of the active site.

Belongs to the NDK family. Homotetramer. The cofactor is Mg(2+).

Its subcellular location is the cytoplasm. The enzyme catalyses a 2'-deoxyribonucleoside 5'-diphosphate + ATP = a 2'-deoxyribonucleoside 5'-triphosphate + ADP. The catalysed reaction is a ribonucleoside 5'-diphosphate + ATP = a ribonucleoside 5'-triphosphate + ADP. In terms of biological role, major role in the synthesis of nucleoside triphosphates other than ATP. The ATP gamma phosphate is transferred to the NDP beta phosphate via a ping-pong mechanism, using a phosphorylated active-site intermediate. This is Nucleoside diphosphate kinase from Nitratidesulfovibrio vulgaris (strain ATCC 29579 / DSM 644 / CCUG 34227 / NCIMB 8303 / VKM B-1760 / Hildenborough) (Desulfovibrio vulgaris).